The primary structure comprises 417 residues: Divinyl chlorophyllide a 8-vinyl-reductase, chloroplastic (417 aa).

The transit peptide at 1-49 (MSLCSSFNVFASYSPKPKTIFKDSKFISQFQVKSSPLASTFHTNESSTS) directs the protein to the chloroplast.

As to expression, highly expressed in leaves, stems and flower buds. Detected in roots.

Its subcellular location is the plastid. It localises to the chloroplast. The enzyme catalyses protochlorophyllide a + NADP(+) = 3,8-divinyl protochlorophyllide a + NADPH + H(+). It functions in the pathway porphyrin-containing compound metabolism; chlorophyll biosynthesis. Catalyzes the conversion of divinyl chlorophyllide to monovinyl chlorophyllide. Reduces the 8-vinyl group of the tetrapyrrole to an ethyl group using NADPH as the reductant. The best substrate is (3,8-divinyl)-chlorophyllide a (DV-Chlidea). Very low activity with (3,8-divinyl)-protochlorophyllide a (DV-Pchlidea) and (3,8-divinyl)-magnesium-protoporphyrin IX monomethyl ester (DV-MPE). No activity with (3,8-divinyl)-chlorophyllide b (DV-Chlideb), (3,8-divinyl)-magnesium-protoporphyrin IX (DV-Mg-Proto) and either (3,8-divinyl)-chlorophyll a (DV-Chla) or b (DV-Chlb). This chain is Divinyl chlorophyllide a 8-vinyl-reductase, chloroplastic (DVR), found in Arabidopsis thaliana (Mouse-ear cress).